Here is a 150-residue protein sequence, read N- to C-terminus: Histone deacetylase complex subunit SAP18 (150 aa).

Belongs to the SAP18 family. In terms of assembly, forms a complex with SIN3 and histone deacetylase. Interacts with the N-terminal residues of TRL. Interacts with BCD; in vitro and yeast cells.

It localises to the nucleus. The protein localises to the cytoplasm. Functionally, involved in the tethering of the SIN3 complex to core histone proteins. Interacts with bicoid (bcd) to repress transcription of bicoid target genes in the anterior tip of the embryo; a process known as retraction. Interacts with Trl and binds to Polycomb response elements at the bithorax complex. May contribute to the regulation of other homeotic gene expressions. This chain is Histone deacetylase complex subunit SAP18 (Bin1), found in Drosophila melanogaster (Fruit fly).